The following is a 437-amino-acid chain: Selenocysteine lyase (437 aa).

Met1 carries the N-acetylmethionine modification. Positions 1-30 are disordered; sequence MEAAGARNRDARSRAEKSPPESRKVYMDYN. Residues 7 to 26 show a composition bias toward basic and acidic residues; it reads RNRDARSRAEKSPPESRKVY. Residue Lys252 is modified to N6-(pyridoxal phosphate)lysine. Residue Cys380 is the S-selanylcysteine intermediate of the active site.

It belongs to the class-V pyridoxal-phosphate-dependent aminotransferase family. In terms of assembly, homodimer. It depends on pyridoxal 5'-phosphate as a cofactor.

Its subcellular location is the cytoplasm. The protein resides in the cytosol. It carries out the reaction L-selenocysteine + AH2 = hydrogenselenide + L-alanine + A + H(+). In terms of biological role, catalyzes the decomposition of L-selenocysteine to L-alanine and elemental selenium. The protein is Selenocysteine lyase (SCLY) of Bos taurus (Bovine).